The sequence spans 272 residues: Indole-3-glycerol phosphate synthase (272 aa).

The protein belongs to the TrpC family.

It catalyses the reaction 1-(2-carboxyphenylamino)-1-deoxy-D-ribulose 5-phosphate + H(+) = (1S,2R)-1-C-(indol-3-yl)glycerol 3-phosphate + CO2 + H2O. The protein operates within amino-acid biosynthesis; L-tryptophan biosynthesis; L-tryptophan from chorismate: step 4/5. The sequence is that of Indole-3-glycerol phosphate synthase from Mycolicibacterium paratuberculosis (strain ATCC BAA-968 / K-10) (Mycobacterium paratuberculosis).